Consider the following 319-residue polypeptide: F-box only protein 8 (319 aa).

One can recognise an F-box domain in the interval 68–111 (FINLEMLPPELSFTILSYLNATDLCLASCVWQDLANDELLWQGL). The region spanning 146-276 (FNANPDEGVN…LILLSIDLTS (131 aa)) is the SEC7 domain.

In terms of biological role, may promote guanine-nucleotide exchange on an ARF. Promotes the activation of ARF through replacement of GDP with GTP (Potential). In Bos taurus (Bovine), this protein is F-box only protein 8 (FBXO8).